We begin with the raw amino-acid sequence, 386 residues long: Methylthioribose-1-phosphate isomerase (386 aa).

Residue Asp258 is the Proton donor of the active site.

The protein belongs to the eIF-2B alpha/beta/delta subunits family. MtnA subfamily.

The protein resides in the cytoplasm. It is found in the nucleus. It catalyses the reaction 5-(methylsulfanyl)-alpha-D-ribose 1-phosphate = 5-(methylsulfanyl)-D-ribulose 1-phosphate. It functions in the pathway amino-acid biosynthesis; L-methionine biosynthesis via salvage pathway; L-methionine from S-methyl-5-thio-alpha-D-ribose 1-phosphate: step 1/6. In terms of biological role, catalyzes the interconversion of methylthioribose-1-phosphate (MTR-1-P) into methylthioribulose-1-phosphate (MTRu-1-P). This Uncinocarpus reesii (strain UAMH 1704) protein is Methylthioribose-1-phosphate isomerase.